A 205-amino-acid chain; its full sequence is Probable GTP-binding protein EngB (205 aa).

One can recognise an EngB-type G domain in the interval 29-203 (QGAEIAFIGR…KAVLSQWFRS (175 aa)). GTP contacts are provided by residues 37–44 (GRSNAGKS), 64–68 (GRTQM), 82–85 (DLPG), 149–152 (TKSD), and 182–184 (FSS). Ser44 and Thr66 together coordinate Mg(2+).

It belongs to the TRAFAC class TrmE-Era-EngA-EngB-Septin-like GTPase superfamily. EngB GTPase family. Requires Mg(2+) as cofactor.

Necessary for normal cell division and for the maintenance of normal septation. The protein is Probable GTP-binding protein EngB of Coxiella burnetii (strain RSA 331 / Henzerling II).